A 376-amino-acid polypeptide reads, in one-letter code: N,N'-diacetylbacillosaminyl-diphospho-undecaprenol alpha-1,3-N-acetylgalactosaminyltransferase (376 aa).

Belongs to the glycosyltransferase group 1 family.

It catalyses the reaction N,N'-diacetyl-alpha-D-bacillosaminyl-tri-trans,hepta-cis-undecaprenyl diphosphate + UDP-N-acetyl-alpha-D-galactosamine = N-acetyl-alpha-D-galactosaminyl-(1-&gt;3)-N,N'-diacetyl-alpha-D-bacillosaminyl-tri-trans,hepta-cis-undecaprenyl diphosphate + UDP + H(+). It functions in the pathway protein modification; protein glycosylation. Adds the first GalNAc residue on to the isoprenoid-linked bacillosamine (2,4-diacetamido-2,4,6-trideoxyglucose) carrier in the N-linked protein glycosylation pathway. Acts first on the undecaprenylpyrophosphate-linked bacillosamine (Und-PP-Bac) substrate to yield the disaccharide. This is N,N'-diacetylbacillosaminyl-diphospho-undecaprenol alpha-1,3-N-acetylgalactosaminyltransferase (pglA) from Campylobacter jejuni subsp. jejuni serotype O:2 (strain ATCC 700819 / NCTC 11168).